Reading from the N-terminus, the 855-residue chain is Transcription factor gaf1 (855 aa).

A compositionally biased stretch (polar residues) spans Lys72 to Asn112. 6 disordered regions span residues Lys72 to Ser126, Thr149 to Pro184, Ser229 to Ser287, Pro412 to Ser483, Asn602 to Thr643, and Lys680 to Met768. The span at Thr149 to Phe168 shows a compositional bias: basic and acidic residues. Position 150 is a phosphoserine (Ser150). 2 stretches are compositionally biased toward low complexity: residues Pro240–Asn250 and Asn428–Gln444. A compositionally biased stretch (polar residues) spans Glu445 to Leu476. The span at Ala614 to Thr623 shows a compositional bias: basic and acidic residues. Composition is skewed to low complexity over residues Arg625–Thr643 and Ser707–Ala717. The segment at Cys635–Cys659 adopts a GATA-type zinc-finger fold. 2 positions are modified to phosphoserine: Ser727 and Ser729. Residues Gln755–Ser767 show a composition bias toward low complexity.

The protein localises to the nucleus. Transcriptional activator. The polypeptide is Transcription factor gaf1 (gaf1) (Schizosaccharomyces pombe (strain 972 / ATCC 24843) (Fission yeast)).